The sequence spans 78 residues: Large ribosomal subunit protein bL28 (78 aa).

It belongs to the bacterial ribosomal protein bL28 family.

The chain is Large ribosomal subunit protein bL28 from Prochlorococcus marinus (strain MIT 9215).